The sequence spans 439 residues: UDP-N-acetylglucosamine--peptide N-acetylglucosaminyltransferase stabilizing protein GtfB (439 aa).

Belongs to the GtfB family. Interacts with glycosyltransferase GtfA (Gtf2); probably forms a heterotetramer with 2 subunits each of GtfA and GtfB. Part of the accessory SecA2/SecY2 protein translocation apparatus.

It localises to the cell membrane. It participates in protein modification; protein glycosylation. Required for the polymorphic O-glycosylation of the serine-rich repeat protein Fap1. A stabilizing protein that is part of the accessory SecA2/SecY2 system specifically required to export Fap1, a serine-rich fimbrial adhesin encoded upstream in the same operon. The GtfA-GtfB (Gtf1-Gtf2 in this bacteria) complex adds GlcNAc from UDP-GlcNAc to Fap1, attaching the first sugar residue. Cannot use not UDP-Glc as substrate. Stabilizes the glycosylation activity of GtfA, causing it to partially localize to the cellular membrane where it is more protease resistant. This chain is UDP-N-acetylglucosamine--peptide N-acetylglucosaminyltransferase stabilizing protein GtfB, found in Streptococcus parasanguinis.